The chain runs to 214 residues: Ras-related protein Rab-11A (214 aa).

GTP contacts are provided by residues 20 to 28 (GDSGVGKSN), 39 to 45 (SLETKST), 68 to 72 (DTAGQ), 126 to 129 (NKSD), and 156 to 158 (SAL). The Effector region motif lies at 42–50 (TKSTIGVEF). Residues cysteine 213 and cysteine 214 are each lipidated (S-geranylgeranyl cysteine).

It belongs to the small GTPase superfamily. Rab family.

The protein localises to the contractile vacuole membrane. Functionally, required for normal contractile vacuole structure and function. Cells expressing a dominant negative rab11A exhibit a more extensive contractile vacuole network and enlarged contractile vacuole bladders. These cells exhibit a functional defect in osmotic regulation where cells immersed in water become rounded and detach from the surface, and contain swollen contractile vacuoles. In Dictyostelium discoideum (Social amoeba), this protein is Ras-related protein Rab-11A (rab11A).